A 597-amino-acid chain; its full sequence is DNA import protein CedB (597 aa).

A helical membrane pass occupies residues V10–I30. Residue G286 to T293 coordinates ATP.

Its subcellular location is the cell membrane. Its function is as follows. Part of the Ced system, which is involved in DNA import. The protein is DNA import protein CedB of Sulfolobus acidocaldarius (strain ATCC 33909 / DSM 639 / JCM 8929 / NBRC 15157 / NCIMB 11770).